The following is a 247-amino-acid chain: Probable transcriptional regulatory protein SynWH7803_1972 (247 aa).

This sequence belongs to the TACO1 family.

The protein localises to the cytoplasm. In Synechococcus sp. (strain WH7803), this protein is Probable transcriptional regulatory protein SynWH7803_1972.